The following is a 410-amino-acid chain: D-amino acid dehydrogenase (410 aa).

9–14 (GGGIVG) contributes to the FAD binding site.

This sequence belongs to the DadA oxidoreductase family. It depends on FAD as a cofactor.

The protein resides in the cell inner membrane. It carries out the reaction a D-alpha-amino acid + a quinone + H2O = a 2-oxocarboxylate + a quinol + NH4(+). In terms of biological role, catalyzes the oxidative deamination of D-amino acids. Has broad substrate specificity; is mostly active on D-proline, and to a lesser extent, on several other D-amino acids such as D-alanine, D-phenylalanine and D-serine. Mediates electron transport from D-proline to coenzyme Q1 in vitro, and is involved in the electron transport chain from D-proline to the c-type cytochrome in vivo. This Helicobacter pylori (strain J99 / ATCC 700824) (Campylobacter pylori J99) protein is D-amino acid dehydrogenase.